The following is a 400-amino-acid chain: Phosphoglycerate kinase (400 aa).

Residues 21–23, Arg37, 60–63, Arg121, and Arg154 contribute to the substrate site; these read DFN and HLGR. ATP is bound by residues Lys204, Glu326, and 355 to 358; that span reads GGDS.

It belongs to the phosphoglycerate kinase family. Monomer.

Its subcellular location is the cytoplasm. The catalysed reaction is (2R)-3-phosphoglycerate + ATP = (2R)-3-phospho-glyceroyl phosphate + ADP. Its pathway is carbohydrate degradation; glycolysis; pyruvate from D-glyceraldehyde 3-phosphate: step 2/5. The protein is Phosphoglycerate kinase of Chloroflexus aurantiacus (strain ATCC 29366 / DSM 635 / J-10-fl).